The chain runs to 376 residues: Glutamate 5-kinase (376 aa).

Lysine 15 contacts ATP. Substrate is bound by residues serine 56, aspartate 143, and asparagine 155. Position 175-176 (175-176) interacts with ATP; it reads SD. The 78-residue stretch at 281-358 folds into the PUA domain; sequence KGTLTIDAGA…PDVMMILGIT (78 aa).

Belongs to the glutamate 5-kinase family.

The protein resides in the cytoplasm. It carries out the reaction L-glutamate + ATP = L-glutamyl 5-phosphate + ADP. It functions in the pathway amino-acid biosynthesis; L-proline biosynthesis; L-glutamate 5-semialdehyde from L-glutamate: step 1/2. In terms of biological role, catalyzes the transfer of a phosphate group to glutamate to form L-glutamate 5-phosphate. The protein is Glutamate 5-kinase of Rhodopseudomonas palustris (strain ATCC BAA-98 / CGA009).